The sequence spans 380 residues: Queuine tRNA-ribosyltransferase (380 aa).

D96 functions as the Proton acceptor in the catalytic mechanism. Substrate-binding positions include D96 to F100, D150, Q193, and G220. Positions G251–S257 are RNA binding. The Nucleophile role is filled by D270. The RNA binding; important for wobble base 34 recognition stretch occupies residues T275–R279. Zn(2+) is bound by residues C308, C310, C313, and H339.

Belongs to the queuine tRNA-ribosyltransferase family. In terms of assembly, homodimer. Within each dimer, one monomer is responsible for RNA recognition and catalysis, while the other monomer binds to the replacement base PreQ1. Zn(2+) is required as a cofactor.

It catalyses the reaction 7-aminomethyl-7-carbaguanine + guanosine(34) in tRNA = 7-aminomethyl-7-carbaguanosine(34) in tRNA + guanine. It participates in tRNA modification; tRNA-queuosine biosynthesis. Its function is as follows. Catalyzes the base-exchange of a guanine (G) residue with the queuine precursor 7-aminomethyl-7-deazaguanine (PreQ1) at position 34 (anticodon wobble position) in tRNAs with GU(N) anticodons (tRNA-Asp, -Asn, -His and -Tyr). Catalysis occurs through a double-displacement mechanism. The nucleophile active site attacks the C1' of nucleotide 34 to detach the guanine base from the RNA, forming a covalent enzyme-RNA intermediate. The proton acceptor active site deprotonates the incoming PreQ1, allowing a nucleophilic attack on the C1' of the ribose to form the product. After dissociation, two additional enzymatic reactions on the tRNA convert PreQ1 to queuine (Q), resulting in the hypermodified nucleoside queuosine (7-(((4,5-cis-dihydroxy-2-cyclopenten-1-yl)amino)methyl)-7-deazaguanosine). This chain is Queuine tRNA-ribosyltransferase, found in Streptococcus pneumoniae (strain Taiwan19F-14).